A 68-amino-acid polypeptide reads, in one-letter code: DNA-directed RNA polymerase subunit omega (68 aa).

Belongs to the RNA polymerase subunit omega family. In terms of assembly, the RNAP catalytic core consists of 2 alpha, 1 beta, 1 beta' and 1 omega subunit. When a sigma factor is associated with the core the holoenzyme is formed, which can initiate transcription.

It catalyses the reaction RNA(n) + a ribonucleoside 5'-triphosphate = RNA(n+1) + diphosphate. Promotes RNA polymerase assembly. Latches the N- and C-terminal regions of the beta' subunit thereby facilitating its interaction with the beta and alpha subunits. This Persephonella marina (strain DSM 14350 / EX-H1) protein is DNA-directed RNA polymerase subunit omega.